The sequence spans 967 residues: MTIAVKESKILYGNFDKAKSGIMKGSGGIVEQGPGLQQRIITPAKEMPPEIPHVEFNQLPLSVLIRNLTVYAAKELSQYMKTNVRSTQDASTRKMEFLRLIIFLRNQFLRLYVLVKWCKTIRQNNFHTMIDLLNWFRGTNIIVNNCLLALKDMSTSMAGAKLPNPDLITALEVLMLGRPDLPTHGFLLTGDENGQQANKIPAKLILKRFRDLNTCLSVKISLMDLPAEMHTYSIKDGRITFTVFPEFEISLSTIDRESPLFFVDVKFLFNENKFPLNTTKIALLVNDILYKSPTPLLSLYQFLHRYVLTLQLYMIHVELQDIETNGKYSGGNLAHHYDPKKNIISLRYWLQSKMNSKCKALIGVEKTSQSIILQWHLPDTKEEGKTTKYNNLLGNIEAILDEITFNHARIIMSELLDTGLFEGDDNKNDTSDTLFFHVPVICVATAPVQLKINTISGIFYFKNPSALLLSYAKQLNQTSDLDDVVNILERLRMDKIVHILRNMFEKTGWICEDVVKLNKPILYDKHKDKKRILTRDLFIRIKDWPANWFFILNLVASGATCIVEKLIGKVQSVKGTWEVKYLDQGNLQVSKLESITYQNVMHMQKTIIQKILNHMIIDSLNELKISKVICQGEASQKLPAYVQTNTAGASNVSIIAIGLESFLQGSKALSDTLESTIFLKMDYEQNEVKLFGKFKKDTQMIRYQCDDLLINFIDKRGLAFHMTEDFTSLNHVVQYLTKFRQKLMQLVVLTDVTEKLHNNFRSEHFQIVKLRPNEISFRYLKNSKDDQDCTIQIVTNETKIEKLQVQLSPLNPQNIIQKYLECDKYDPHFIFNYLHFTSKLFSAVKSIESITNTNTMTITLHLHTLAAYQLSYHDRLTGGQIALCIDLRNSPSRAGSMYHLYFAQEDYSASKNPMYPAILQVINNVFMLNNNTKRKVPSVIRLGTGVACPLGDIEPLLEEIHSILIRS.

This sequence belongs to the Mediator complex subunit 14 family. As to quaternary structure, component of the Mediator complex.

Its subcellular location is the nucleus. Its function is as follows. Component of the Mediator complex, a coactivator involved in the regulated transcription of nearly all RNA polymerase II-dependent genes. Mediator functions as a bridge to convey information from gene-specific regulatory proteins to the basal RNA polymerase II transcription machinery. Mediator is recruited to promoters by direct interactions with regulatory proteins and serves as a scaffold for the assembly of a functional preinitiation complex with RNA polymerase II and the general transcription factors. The sequence is that of Mediator of RNA polymerase II transcription subunit 14 (RGR1) from Eremothecium gossypii (strain ATCC 10895 / CBS 109.51 / FGSC 9923 / NRRL Y-1056) (Yeast).